Reading from the N-terminus, the 324-residue chain is Interleukin-12 subunit beta (324 aa).

The first 22 residues, 1–22 (MHLQQLVVSWFSLVWLASPIVA), serve as a signal peptide directing secretion. The Ig-like C2-type domain maps to 23–106 (IWELEKNVYV…LSQSLLLLHK (84 aa)). C50 and C90 are oxidised to a cystine. N-linked (GlcNAc...) asparagine glycosylation is found at N125, N135, and N218. Residues 233–324 (PPKNLQLNPL…WSEWASVSCN (92 aa)) form the Fibronectin type-III domain.

The protein belongs to the IL-12B family. Heterodimer with IL12A; disulfide-linked. The heterodimer is known as interleukin IL-12. Heterodimer with IL23A; disulfide-linked. The heterodimer is known as interleukin IL-23. Also secreted as a monomer. Interacts with NBR1; this interaction promotes IL-12 secretion.

The protein resides in the secreted. In terms of biological role, cytokine that can act as a growth factor for activated T and NK cells, enhance the lytic activity of NK/lymphokine-activated killer cells, and stimulate the production of IFN-gamma by resting PBMC. Associates with IL23A to form the IL-23 interleukin, a heterodimeric cytokine which functions in innate and adaptive immunity. IL-23 may constitute with IL-17 an acute response to infection in peripheral tissues. IL-23 binds to a heterodimeric receptor complex composed of IL12RB1 and IL23R, activates the Jak-Stat signaling cascade, stimulates memory rather than naive T-cells and promotes production of pro-inflammatory cytokines. IL-23 induces autoimmune inflammation and thus may be responsible for autoimmune inflammatory diseases and may be important for tumorigenesis. The sequence is that of Interleukin-12 subunit beta (IL12B) from Sus scrofa (Pig).